The primary structure comprises 761 residues: Translation initiation factor IF-2 (761 aa).

Positions 39–179 (DEETLNKAKQ…KVNHQQMPLP (141 aa)) are disordered. Positions 45-105 (KAKQAGKPAA…NNQQSQSQGQ (61 aa)) are enriched in low complexity. Polar residues predominate over residues 106 to 120 (TKRPSQASNNQSGAA). Over residues 142–154 (PGSNNRRPGNNQN) the composition is skewed to low complexity. Over residues 155–168 (RRNHGNRGGKRRPQ) the composition is skewed to basic residues. In terms of domain architecture, tr-type G spans 262–435 (ERPPVVTIMG…EVEEFKANPD (174 aa)). Positions 271 to 278 (GHVDHGKT) are G1. 271 to 278 (GHVDHGKT) contacts GTP. Residues 296-300 (GITQH) form a G2 region. The G3 stretch occupies residues 317-320 (DTPG). Residues 317 to 321 (DTPGH) and 371 to 374 (NKID) contribute to the GTP site. The tract at residues 371–374 (NKID) is G4. Residues 407–409 (SAL) form a G5 region.

Belongs to the TRAFAC class translation factor GTPase superfamily. Classic translation factor GTPase family. IF-2 subfamily.

It is found in the cytoplasm. Its function is as follows. One of the essential components for the initiation of protein synthesis. Protects formylmethionyl-tRNA from spontaneous hydrolysis and promotes its binding to the 30S ribosomal subunits. Also involved in the hydrolysis of GTP during the formation of the 70S ribosomal complex. The chain is Translation initiation factor IF-2 from Shouchella clausii (strain KSM-K16) (Alkalihalobacillus clausii).